The sequence spans 204 residues: Rho GDP-dissociation inhibitor 1 (204 aa).

The segment at 1 to 36 (MAEQEPTAEQLAQIAAENEEDEHSVNYKPPAQKSIQ) is disordered. Residue A2 is modified to N-acetylalanine. S34 is modified (phosphoserine). The residue at position 43 (K43) is an N6-acetyllysine. Position 47 is a phosphoserine (S47). Residues K105 and K127 each carry the N6-acetyllysine modification. Residues K138 and K141 each participate in a glycyl lysine isopeptide (Lys-Gly) (interchain with G-Cter in SUMO1); alternate cross-link. Glycyl lysine isopeptide (Lys-Gly) (interchain with G-Cter in SUMO2); alternate cross-links involve residues K138 and K141. N6-acetyllysine; alternate is present on K141. K141 carries the N6-succinyllysine; alternate modification. K178 carries the N6-acetyllysine modification.

This sequence belongs to the Rho GDI family. Monomer. Interacts with FER. Interacts with PLXNB3. Forms a heterodimer with RAC1. Interacts with RHOA, the affinity is increased by three orders of magnitude when RHOA is prenylated. Interacts with PSMD10; the interaction increases ARHGDIA association with RHOA, leading to ARHGDIA-mediated inactivation of RHOA and ROCK and prolonged AKT activation. Interacts with KANK2; the interaction is direct and may regulate the interaction of ARHGDIA with RHOA, RAC1 and CDC42. Interacts with RHOC. Interacts with CDC42. Interacts with NGFR (via death domain); NGFR binding decreases the affinity for RHOA.

The protein localises to the cytoplasm. In terms of biological role, controls Rho proteins homeostasis. Regulates the GDP/GTP exchange reaction of the Rho proteins by inhibiting the dissociation of GDP from them, and the subsequent binding of GTP to them. Retains Rho proteins such as CDC42, RAC1 and RHOA in an inactive cytosolic pool, regulating their stability and protecting them from degradation. Actively involved in the recycling and distribution of activated Rho GTPases in the cell, mediates extraction from membranes of both inactive and activated molecules due its exceptionally high affinity for prenylated forms. Through the modulation of Rho proteins, may play a role in cell motility regulation. In glioma cells, inhibits cell migration and invasion by mediating the signals of SEMA5A and PLXNB3 that lead to inactivation of RAC1. The chain is Rho GDP-dissociation inhibitor 1 (ARHGDIA) from Homo sapiens (Human).